The sequence spans 370 residues: 3-dehydroquinate synthase (370 aa).

Residues 112–116 (GVIGD), 136–137 (TT), Lys149, Lys158, and 176–179 (TLAT) contribute to the NAD(+) site. Zn(2+) contacts are provided by Glu191, His254, and His276.

Belongs to the sugar phosphate cyclases superfamily. Dehydroquinate synthase family. It depends on Co(2+) as a cofactor. Zn(2+) serves as cofactor. NAD(+) is required as a cofactor.

The protein resides in the cytoplasm. It carries out the reaction 7-phospho-2-dehydro-3-deoxy-D-arabino-heptonate = 3-dehydroquinate + phosphate. The protein operates within metabolic intermediate biosynthesis; chorismate biosynthesis; chorismate from D-erythrose 4-phosphate and phosphoenolpyruvate: step 2/7. In terms of biological role, catalyzes the conversion of 3-deoxy-D-arabino-heptulosonate 7-phosphate (DAHP) to dehydroquinate (DHQ). This chain is 3-dehydroquinate synthase, found in Xylella fastidiosa (strain M23).